The primary structure comprises 569 residues: Proline--tRNA ligase (569 aa).

It belongs to the class-II aminoacyl-tRNA synthetase family. ProS type 1 subfamily. As to quaternary structure, homodimer.

Its subcellular location is the cytoplasm. The catalysed reaction is tRNA(Pro) + L-proline + ATP = L-prolyl-tRNA(Pro) + AMP + diphosphate. In terms of biological role, catalyzes the attachment of proline to tRNA(Pro) in a two-step reaction: proline is first activated by ATP to form Pro-AMP and then transferred to the acceptor end of tRNA(Pro). As ProRS can inadvertently accommodate and process non-cognate amino acids such as alanine and cysteine, to avoid such errors it has two additional distinct editing activities against alanine. One activity is designated as 'pretransfer' editing and involves the tRNA(Pro)-independent hydrolysis of activated Ala-AMP. The other activity is designated 'posttransfer' editing and involves deacylation of mischarged Ala-tRNA(Pro). The misacylated Cys-tRNA(Pro) is not edited by ProRS. This chain is Proline--tRNA ligase, found in Desulforamulus reducens (strain ATCC BAA-1160 / DSM 100696 / MI-1) (Desulfotomaculum reducens).